We begin with the raw amino-acid sequence, 479 residues long: Sulfate adenylyltransferase subunit 1 (479 aa).

Residues 25-239 enclose the tr-type G domain; the sequence is KSLLRFLTCG…EVLETVDIQR (215 aa). A G1 region spans residues 34-41; the sequence is GSVDDGKS. 34 to 41 is a GTP binding site; the sequence is GSVDDGKS. A G2 region spans residues 92–96; sequence GITID. The G3 stretch occupies residues 113–116; the sequence is DTPG. GTP is bound by residues 113–117 and 168–171; these read DTPGH and NKMD. The segment at 168–171 is G4; that stretch reads NKMD. Residues 206 to 208 are G5; it reads SAL.

The protein belongs to the TRAFAC class translation factor GTPase superfamily. Classic translation factor GTPase family. CysN/NodQ subfamily. As to quaternary structure, heterodimer composed of CysD, the smaller subunit, and CysN.

The catalysed reaction is sulfate + ATP + H(+) = adenosine 5'-phosphosulfate + diphosphate. The protein operates within sulfur metabolism; hydrogen sulfide biosynthesis; sulfite from sulfate: step 1/3. Functionally, with CysD forms the ATP sulfurylase (ATPS) that catalyzes the adenylation of sulfate producing adenosine 5'-phosphosulfate (APS) and diphosphate, the first enzymatic step in sulfur assimilation pathway. APS synthesis involves the formation of a high-energy phosphoric-sulfuric acid anhydride bond driven by GTP hydrolysis by CysN coupled to ATP hydrolysis by CysD. The chain is Sulfate adenylyltransferase subunit 1 from Salmonella agona (strain SL483).